Consider the following 89-residue polypeptide: Large ribosomal subunit protein bL28 (89 aa).

This sequence belongs to the bacterial ribosomal protein bL28 family.

The chain is Large ribosomal subunit protein bL28 from Chlamydia trachomatis serovar A (strain ATCC VR-571B / DSM 19440 / HAR-13).